The primary structure comprises 123 residues: Transmembrane protein 254 (123 aa).

Alanine 2 carries the post-translational modification N-acetylalanine. Transmembrane regions (helical) follow at residues leucine 15–proline 35, leucine 61–valine 81, and leucine 95–tyrosine 115.

Its subcellular location is the membrane. This Homo sapiens (Human) protein is Transmembrane protein 254 (TMEM254).